A 319-amino-acid polypeptide reads, in one-letter code: Ataxin-3 homolog (319 aa).

The Josephin domain occupies 8–179; the sequence is ISSIFFERQQ…NSEADDFITL (172 aa). Residue cysteine 21 is the Nucleophile of the active site. Histidine 118 functions as the Proton acceptor in the catalytic mechanism. Residue asparagine 133 is part of the active site. 2 consecutive UIM domains span residues 218 to 237 and 242 to 261; these read QEDR…KESS and SDED…DPNI. Positions 253–319 are disordered; it reads MSLSQDPNIP…EKKSQNVPEE (67 aa). Positions 254-267 are enriched in polar residues; it reads SLSQDPNIPSTSAA. Residues 295-313 are compositionally biased toward basic and acidic residues; the sequence is QQRRDRAKFLEKLEEEKKS. An interaction with cdc-48.1 and cdc-48.2 region spans residues 297-300; sequence RRDR.

Forms a complex composed of deubiquitinating enzyme atx-3, adapter ubxn-5 and cdc-48.1. Forms a complex composed of deubiquitinating enzyme atx-3, E4 ubiquitin-protein ligase ufd-2 and cdc-48.1. Interacts (via RRDR motif) with cdc-48.1 (via N-terminus) and cdc-48.2 (via N-terminus); the interaction with cdc-48.1 is not required for atx-3 enzymatic activity. Interacts (via C-terminus) with ubxn-5. May interact with ned-8.

It localises to the cytoplasm. The protein localises to the nucleus. The protein resides in the nucleolus. The catalysed reaction is Thiol-dependent hydrolysis of ester, thioester, amide, peptide and isopeptide bonds formed by the C-terminal Gly of ubiquitin (a 76-residue protein attached to proteins as an intracellular targeting signal).. Functionally, acts as a chain editing deubiquitinating enzyme that binds and cleaves 'Lys-48'-linked polyubiquitin chains, with a preference for chains containing four or more ubiquitin molecules thereby modulating protein degradation by the ubiquitin-proteasome pathway. Probably by regulating the IGF-1-insulin-like pathway, regulates lifespan. Regulates germline DNA double-strand-break repair and apoptosis in response to DNA damage by recruiting E4 ubiquitin-protein ligase ufd-2 to DNA repair foci. Interacts with key regulators of transcription and represses transcription. Acts as a histone-binding protein that regulates transcription. The sequence is that of Ataxin-3 homolog from Caenorhabditis briggsae.